A 184-amino-acid polypeptide reads, in one-letter code: Inactive cytochrome P450 monooxygenase lolP2 (184 aa).

Residues 10–30 (GIVWLTVAAIAISYILQSSFL) form a helical membrane-spanning segment. Positions 161-184 (RRTRGSRPRSRPRWMPARWSRSSP) are disordered. Over residues 163–172 (TRGSRPRSRP) the composition is skewed to basic residues. Residues 173-184 (RWMPARWSRSSP) are compositionally biased toward low complexity.

It belongs to the cytochrome P450 family.

It is found in the membrane. Cytochrome P450 monooxygenase; part of the gene cluster that mediates the biosynthesis of loline alkaloids, potent insecticidal agents composed of a pyrrolizidine ring system and an uncommon ether bridge linking carbons 2 and 7. Lolines are structurally differentiated by the various modifications of the L-amino group and include norloline, loline, N-methylloline, N-acetylloline, N-acetylnorloline, and N-formylloline. The first committed step is the condensation of O-acetyl-L-homoserine (derived from L-aspartic acid) and L-proline, probably catalyzed by the gamma-type pyridoxal 5'-phosphate(PLP)-dependent enzyme lolC, to give the diamino diacid, NACPP. Ensuing cyclization, decarboxylation, and acetylation steps yield 1-exo-acetamidopyrrolizidine (AcAP). LolO is required for installation of the ether bridge upon the pathway intermediate, 1-exo-acetamidopyrrolizidine (AcAP). In sequential 2-oxoglutarate- and O(2)-consuming steps, lolO removes hydrogens from C2 and C7 of AcAP to form both carbon-oxygen bonds in N-acetylnorloline (NANL), the precursor to all other lolines. The enzymes lolD, lolE, lolF and lolT have also been proposed to be involved in the ether-bridge installation. Further processing of the exocyclic moiety of NANL by fungal N-acetamidase (LolN), methyltransferase (LolM), and cytochrome P450 (LolP) enzymes, with occasional involvement of a plant acetyltransferase, generates the other known lolines. LolN transforms NANL to norlonine which is monomethylated and dimethylated to respectively lonine and N-methyllonine (NML) by lolM. LolP catalyzes hydroxylation of the methyl group in N-methylloline (NML) and further oxygenation to N-formylloline (NFL). A plant acetyltransferase is responsible for the acetylation of loline to form N-acetylloline (NAL). LolA might interact with aspartate kinase to prevent feedback inhibition of its activity by these end products and thereby promote production of L-homoserine from L-aspartate. The sequence is that of Inactive cytochrome P450 monooxygenase lolP2 from Epichloe uncinata (Endophyte fungus).